The chain runs to 423 residues: Glutamyl-tRNA reductase (423 aa).

Substrate is bound by residues 49–52 (TCNR), S109, 114–116 (EGQ), and Q120. C50 serves as the catalytic Nucleophile. 189–194 (GAGETG) provides a ligand contact to NADP(+).

The protein belongs to the glutamyl-tRNA reductase family. Homodimer.

The catalysed reaction is (S)-4-amino-5-oxopentanoate + tRNA(Glu) + NADP(+) = L-glutamyl-tRNA(Glu) + NADPH + H(+). Its pathway is porphyrin-containing compound metabolism; protoporphyrin-IX biosynthesis; 5-aminolevulinate from L-glutamyl-tRNA(Glu): step 1/2. The protein operates within porphyrin-containing compound metabolism; chlorophyll biosynthesis. Its function is as follows. Catalyzes the NADPH-dependent reduction of glutamyl-tRNA(Glu) to glutamate 1-semialdehyde (GSA). This chain is Glutamyl-tRNA reductase, found in Chlorobium limicola (strain DSM 245 / NBRC 103803 / 6330).